The following is a 67-amino-acid chain: Spiniferin (67 aa).

Positions 1-23 (MKTQLAILLITLVLFQMFSQSDA) are cleaved as a signal peptide. L36 bears the Leucine amide mark. Residues 40–67 (GLNDLSDLDELFDGEISKADLDFLREIM) constitute a propeptide that is removed on maturation.

It belongs to the non-disulfide-bridged peptide (NDBP) superfamily. Short antimicrobial peptide (group 4) family. As to expression, expressed by the venom gland.

Its subcellular location is the secreted. The protein resides in the target cell membrane. Its function is as follows. Alpha-helical and amphipathic peptide with weak antimicrobial activities against both Gram-positive (MIC=41 uM to &gt;82 uM) and Gram-negative (MIC&gt;82 uM) bacteria. It has extremely weak hemolytic activity against human erythrocytes. The sequence is that of Spiniferin from Heterometrus spinifer (Asia giant forest scorpion).